A 157-amino-acid chain; its full sequence is Putative pre-16S rRNA nuclease (157 aa).

It belongs to the YqgF nuclease family.

It localises to the cytoplasm. Functionally, could be a nuclease involved in processing of the 5'-end of pre-16S rRNA. The sequence is that of Putative pre-16S rRNA nuclease from Anaplasma marginale (strain St. Maries).